The following is a 470-amino-acid chain: MATFMTEDFLLKNDIARTLYHKYAAPMPIYDFHCHLSPQEIADDRRFDNLGQIWLEGDHYKWRALRSAGVDESLITGKETSDYEKYMAWANTVPKTLGNPLYHWTHLELRRPFGITSTLFGPDTAESIWTQCNEKLATPAFSARGIMQQMNVRMVGTTDDPIDSLEYHRQIAADDSINIEVAPSWRPDKVFKIELDGFVDYLGKLEAAADVSITRFDDLRQALTRRLDHFAACGCRASDHGIETLRFAPVPDDAQLDAILGKRLAGETLSELEIAQFTTAVLVWLGRQYAARGWVMQLHIGAIRNNNTRMFRLLGPDTGFDSIGDNNISWALSRLLDSMDVTNELPKTILYCLNPRDNEVLATMIGNFQGPGIAGKVQFGSGWWFNDQKDGMLRQLEQLSQMGLLSQFVGMLTDSRSFLSYTRHEYFRRILCNLLGQWAQDGEIPDDEAMLSRMVQDICFNNAQRYFTIK.

This sequence belongs to the metallo-dependent hydrolases superfamily. Uronate isomerase family.

It catalyses the reaction D-glucuronate = D-fructuronate. The enzyme catalyses aldehydo-D-galacturonate = keto-D-tagaturonate. The protein operates within carbohydrate metabolism; pentose and glucuronate interconversion. The chain is Uronate isomerase from Salmonella paratyphi A (strain ATCC 9150 / SARB42).